We begin with the raw amino-acid sequence, 205 residues long: MSAIAPGMILFAYLCGSISSAILVCRIAGLPDPRESGSGNPGATNVLRIGGKGAAVAVLIFDILKGMLPVWGAYALGVTPFWLGLIAIAACLGHIWPVFFGFKGGKGVATAFGAIAPIGWDLTGVMAGTWLLTVLLSGYSSLGAIVSALIAPFYVWWFKPQFTFPVSMLSCLILLRHHDNIQRLWRRQETKIWTKLKKKRQKDSE.

Residues 1–3 are Periplasmic-facing; it reads MSA. Residues 4 to 24 form a helical membrane-spanning segment; that stretch reads IAPGMILFAYLCGSISSAILV. Over 25 to 52 the chain is Cytoplasmic; it reads CRIAGLPDPRESGSGNPGATNVLRIGGK. The helical transmembrane segment at 53 to 73 threads the bilayer; sequence GAAVAVLIFDILKGMLPVWGA. The Periplasmic segment spans residues 74–80; it reads YALGVTP. A helical membrane pass occupies residues 81-101; that stretch reads FWLGLIAIAACLGHIWPVFFG. Residues 102–111 are Cytoplasmic-facing; that stretch reads FKGGKGVATA. A helical membrane pass occupies residues 112-132; the sequence is FGAIAPIGWDLTGVMAGTWLL. Over 133-137 the chain is Periplasmic; that stretch reads TVLLS. The helical transmembrane segment at 138-158 threads the bilayer; that stretch reads GYSSLGAIVSALIAPFYVWWF. The Cytoplasmic segment spans residues 159–205; that stretch reads KPQFTFPVSMLSCLILLRHHDNIQRLWRRQETKIWTKLKKKRQKDSE.

Belongs to the PlsY family. As to quaternary structure, probably interacts with PlsX.

It localises to the cell inner membrane. The enzyme catalyses sn-glycerol 3-phosphate + an acyl-CoA = a 1-acyl-sn-glycero-3-phosphate + CoA. The catalysed reaction is a fatty acyl-[ACP] + sn-glycerol 3-phosphate = a 1-acyl-sn-glycero-3-phosphate + holo-[ACP]. The protein operates within lipid metabolism; phospholipid metabolism. Its function is as follows. Catalyzes the transfer of an acyl group from acyl-ACP to glycerol-3-phosphate (G3P) to form lysophosphatidic acid (LPA). This enzyme can also utilize acyl-CoA as fatty acyl donor, but not acyl-PO(4). In Salmonella schwarzengrund (strain CVM19633), this protein is Glycerol-3-phosphate acyltransferase.